A 285-amino-acid polypeptide reads, in one-letter code: Hydroxyethylthiazole kinase 1 (285 aa).

Methionine 48 contributes to the substrate binding site. ATP is bound by residues arginine 124 and serine 183. A substrate-binding site is contributed by glycine 210.

Belongs to the Thz kinase family. Requires Mg(2+) as cofactor.

The enzyme catalyses 5-(2-hydroxyethyl)-4-methylthiazole + ATP = 4-methyl-5-(2-phosphooxyethyl)-thiazole + ADP + H(+). The protein operates within cofactor biosynthesis; thiamine diphosphate biosynthesis; 4-methyl-5-(2-phosphoethyl)-thiazole from 5-(2-hydroxyethyl)-4-methylthiazole: step 1/1. In terms of biological role, catalyzes the phosphorylation of the hydroxyl group of 4-methyl-5-beta-hydroxyethylthiazole (THZ). The sequence is that of Hydroxyethylthiazole kinase 1 from Methanosphaera stadtmanae (strain ATCC 43021 / DSM 3091 / JCM 11832 / MCB-3).